A 405-amino-acid polypeptide reads, in one-letter code: DNA polymerase IV 1 (405 aa).

Residues 23–203 (IAHIDCDAFY…RPVTTIWGVG (181 aa)) form the UmuC domain. Mg(2+) is bound by residues Asp-27 and Asp-120. Residue Glu-121 is part of the active site.

This sequence belongs to the DNA polymerase type-Y family. In terms of assembly, monomer. Mg(2+) is required as a cofactor.

Its subcellular location is the cytoplasm. The catalysed reaction is DNA(n) + a 2'-deoxyribonucleoside 5'-triphosphate = DNA(n+1) + diphosphate. Its function is as follows. Poorly processive, error-prone DNA polymerase involved in untargeted mutagenesis. Copies undamaged DNA at stalled replication forks, which arise in vivo from mismatched or misaligned primer ends. These misaligned primers can be extended by PolIV. Exhibits no 3'-5' exonuclease (proofreading) activity. May be involved in translesional synthesis, in conjunction with the beta clamp from PolIII. This is DNA polymerase IV 1 (dinB1) from Agrobacterium fabrum (strain C58 / ATCC 33970) (Agrobacterium tumefaciens (strain C58)).